A 272-amino-acid polypeptide reads, in one-letter code: Glutamate racemase (272 aa).

Substrate-binding positions include 13-14 (DS) and 45-46 (YG). The Proton donor/acceptor role is filled by C76. Substrate is bound at residue 77 to 78 (NT). Catalysis depends on C186, which acts as the Proton donor/acceptor. Substrate is bound at residue 187-188 (TH).

The protein belongs to the aspartate/glutamate racemases family.

The catalysed reaction is L-glutamate = D-glutamate. It participates in cell wall biogenesis; peptidoglycan biosynthesis. Provides the (R)-glutamate required for cell wall biosynthesis. This Cupriavidus pinatubonensis (strain JMP 134 / LMG 1197) (Cupriavidus necator (strain JMP 134)) protein is Glutamate racemase.